Consider the following 249-residue polypeptide: LexA repressor (249 aa).

The segment at 1–25 (MAAAATGGRATSQPKKTTKGLTPRQ) is disordered. Residues 45-65 (MREIGDTVGLASLSSVTHQLS) constitute a DNA-binding region (H-T-H motif). Residues Ser173 and Lys210 each act as for autocatalytic cleavage activity in the active site.

This sequence belongs to the peptidase S24 family. As to quaternary structure, homodimer.

The catalysed reaction is Hydrolysis of Ala-|-Gly bond in repressor LexA.. Represses a number of genes involved in the response to DNA damage (SOS response), including recA and lexA. In the presence of single-stranded DNA, RecA interacts with LexA causing an autocatalytic cleavage which disrupts the DNA-binding part of LexA, leading to derepression of the SOS regulon and eventually DNA repair. This is LexA repressor from Pseudarthrobacter chlorophenolicus (strain ATCC 700700 / DSM 12829 / CIP 107037 / JCM 12360 / KCTC 9906 / NCIMB 13794 / A6) (Arthrobacter chlorophenolicus).